We begin with the raw amino-acid sequence, 185 residues long: Large ribosomal subunit protein uL5 (185 aa).

This sequence belongs to the universal ribosomal protein uL5 family. Part of the 50S ribosomal subunit; part of the 5S rRNA/L5/L18/L25 subcomplex. Contacts the 5S rRNA and the P site tRNA. Forms a bridge to the 30S subunit in the 70S ribosome.

Functionally, this is one of the proteins that bind and probably mediate the attachment of the 5S RNA into the large ribosomal subunit, where it forms part of the central protuberance. In the 70S ribosome it contacts protein S13 of the 30S subunit (bridge B1b), connecting the 2 subunits; this bridge is implicated in subunit movement. Contacts the P site tRNA; the 5S rRNA and some of its associated proteins might help stabilize positioning of ribosome-bound tRNAs. This is Large ribosomal subunit protein uL5 from Magnetococcus marinus (strain ATCC BAA-1437 / JCM 17883 / MC-1).